Here is an 888-residue protein sequence, read N- to C-terminus: MTQMTVEQFAHDLGMLPNLLLEQLQAAGVAKRSAADFVTEQDKTQLLDYLRKSHGSSGSRTKITLARRQTTEIKQSDSAGRPRTIEVKVRKKRVLTTKQDESDAAGKRAAEDVSLRTAEAPEAPEAVPVKSVLDAEQIALRAEEARKRSELMARQAAELKEKQEKRRQQVTAQTEVKKESTQVQEPGSETAAVSGSVAATQPESTETAAVTPSATITVTTQTTPAAKERAPQKPAVKPEEKGEKKKKQARQQEAWKDEPVKRRESKARGDVSGGQEWRMRKDKHGRSRSDESQSQHAFSAPTEPVVHEVLIPETISVAVLAQKMAVKAAEVIKVLMKMGNMVTINQMLDQDTAMIVVEEMGHVAKIAAPDNPEAFLEEVDLSPDEARMESRAPVVTVMGHVDHGKTSLLDYIRRTRVAGGEAGGITQHIGAYHVKTSRGVVTFLDTPGHEAFTAMRARGAKITDIVILVVAADDGVMPQTIEAVHHAKAASIPIVVAVNKMDKPEANLERIKQELVNHGVVPEDWGGDAMFIGVSAKTGQGIDELLEAVLLQAEVLELKAVRDAPAKGVIIESRLDKGRGPVATVLVQSGTLRRGDVVLTGAVFGKIRAMLDERGKSVSEAGTSIPVEIQGLSEVAAAGEVFIALSDERKAREIALFRQGKFRDVRLDKLHVAKMEDVFGHQEDISTLNLIIKADVQGSCEALAYALKKLETDEVKINIVHSGVGAIIESDINLALASKAVVIGFNCRADLGARKLIASTGVDVRYYNIIYEAVDEVKKALSGMMTPDRKEKILGLVDIREIYRISKVGVVAGCYVLEGLIRRDAPVRVLRDGVVIHSGSLDSLKRFKDDVKEVKSGFECGLSLKNFNDIQQGDQIEVYEIVETARVL.

2 disordered regions span residues 96-122 (TTKQ…EAPE) and 158-302 (ELKE…SAPT). Basic and acidic residues-rich tracts occupy residues 98–114 (KQDE…EDVS) and 158–167 (ELKEKQEKRR). The span at 181–206 (TQVQEPGSETAAVSGSVAATQPESTE) shows a compositional bias: polar residues. Over residues 207–225 (TAAVTPSATITVTTQTTPA) the composition is skewed to low complexity. 2 stretches are compositionally biased toward basic and acidic residues: residues 226–243 (AKER…EKGE) and 253–269 (EAWK…KARG). Positions 390–559 (SRAPVVTVMG…LLQAEVLELK (170 aa)) constitute a tr-type G domain. The interval 399–406 (GHVDHGKT) is G1. 399–406 (GHVDHGKT) contributes to the GTP binding site. Positions 424-428 (GITQH) are G2. Positions 445-448 (DTPG) are G3. GTP-binding positions include 445–449 (DTPGH) and 499–502 (NKMD). The G4 stretch occupies residues 499 to 502 (NKMD). Residues 535–537 (SAK) form a G5 region.

It belongs to the TRAFAC class translation factor GTPase superfamily. Classic translation factor GTPase family. IF-2 subfamily.

The protein resides in the cytoplasm. In terms of biological role, one of the essential components for the initiation of protein synthesis. Protects formylmethionyl-tRNA from spontaneous hydrolysis and promotes its binding to the 30S ribosomal subunits. Also involved in the hydrolysis of GTP during the formation of the 70S ribosomal complex. This Nitrosomonas eutropha (strain DSM 101675 / C91 / Nm57) protein is Translation initiation factor IF-2.